A 194-amino-acid chain; its full sequence is Rho-related protein racC (194 aa).

Ala-17, Gly-19, Lys-20, Thr-21, Cys-22, Glu-34, Tyr-36, Thr-39, Gly-64, Lys-120, Asp-122, Ala-163, and Lys-164 together coordinate GTP. Thr-21 is a Mg(2+) binding site. Short sequence motifs (switch) lie at residues 30-41 and 61-79; these read RKFPEDYIPTVF and DTAG…YSSA. Thr-39 lines the Mg(2+) pocket. Residue Cys-191 is modified to Cysteine methyl ester. The S-geranylgeranyl cysteine moiety is linked to residue Cys-191. The propeptide at 192 to 194 is removed in mature form; sequence ALL.

The protein belongs to the small GTPase superfamily. Rho family. In terms of assembly, interacts (GTP-bound form) with PAK4 (via CRIB domain). Interacts (GTP-bound form) with PAK5 (via CRIB domain). The cofactor is Mg(2+).

The protein localises to the cell membrane. It localises to the cytoplasm. Its subcellular location is the cytoskeleton. It catalyses the reaction GTP + H2O = GDP + phosphate + H(+). Regulated by guanine nucleotide exchange factors (GEFs) which promote the exchange of bound GDP for free GTP, GTPase activating proteins (GAPs) which increase the GTP hydrolysis activity, and GDP dissociation inhibitors which inhibit the dissociation of the nucleotide from the GTPase. Functionally, small GTPase which cycles between active GTP-bound and inactive GDP-bound states. The chain is Rho-related protein racC from Entamoeba histolytica (strain ATCC 30459 / HM-1:IMSS / ABRM).